The sequence spans 236 residues: Sugar fermentation stimulation protein homolog (236 aa).

The protein belongs to the SfsA family.

This chain is Sugar fermentation stimulation protein homolog, found in Pseudomonas fluorescens (strain SBW25).